The sequence spans 141 residues: Nucleoside diphosphate kinase (141 aa).

Residues Lys-11, Phe-59, Arg-87, Thr-93, Arg-104, and Asn-114 each contribute to the ATP site. The active-site Pros-phosphohistidine intermediate is the His-117.

The protein belongs to the NDK family. As to quaternary structure, homotetramer. Requires Mg(2+) as cofactor.

The protein resides in the cytoplasm. The catalysed reaction is a 2'-deoxyribonucleoside 5'-diphosphate + ATP = a 2'-deoxyribonucleoside 5'-triphosphate + ADP. It carries out the reaction a ribonucleoside 5'-diphosphate + ATP = a ribonucleoside 5'-triphosphate + ADP. Major role in the synthesis of nucleoside triphosphates other than ATP. The ATP gamma phosphate is transferred to the NDP beta phosphate via a ping-pong mechanism, using a phosphorylated active-site intermediate. In Alkalilimnicola ehrlichii (strain ATCC BAA-1101 / DSM 17681 / MLHE-1), this protein is Nucleoside diphosphate kinase.